We begin with the raw amino-acid sequence, 500 residues long: Ribose import ATP-binding protein RbsA (500 aa).

ABC transporter domains lie at 3 to 239 (IEMK…VGRE) and 246 to 493 (DRTP…TGGV). 35–42 (GENGAGKS) lines the ATP pocket.

It belongs to the ABC transporter superfamily. Ribose importer (TC 3.A.1.2.1) family. As to quaternary structure, the complex is composed of an ATP-binding protein (RbsA), two transmembrane proteins (RbsC) and a solute-binding protein (RbsB).

Its subcellular location is the cell membrane. It carries out the reaction D-ribose(out) + ATP + H2O = D-ribose(in) + ADP + phosphate + H(+). Part of the ABC transporter complex RbsABC involved in ribose import. Responsible for energy coupling to the transport system. This is Ribose import ATP-binding protein RbsA from Lacticaseibacillus paracasei (strain ATCC 334 / BCRC 17002 / CCUG 31169 / CIP 107868 / KCTC 3260 / NRRL B-441) (Lactobacillus paracasei).